Here is a 246-residue protein sequence, read N- to C-terminus: Triosephosphate isomerase (246 aa).

Residue 9–11 participates in substrate binding; the sequence is NWK. His95 serves as the catalytic Electrophile. The active-site Proton acceptor is Glu165. Residues Gly171, Ser210, and 231–232 contribute to the substrate site; that span reads GG.

This sequence belongs to the triosephosphate isomerase family. In terms of assembly, homodimer.

The protein localises to the cytoplasm. It catalyses the reaction D-glyceraldehyde 3-phosphate = dihydroxyacetone phosphate. It participates in carbohydrate biosynthesis; gluconeogenesis. The protein operates within carbohydrate degradation; glycolysis; D-glyceraldehyde 3-phosphate from glycerone phosphate: step 1/1. Functionally, involved in the gluconeogenesis. Catalyzes stereospecifically the conversion of dihydroxyacetone phosphate (DHAP) to D-glyceraldehyde-3-phosphate (G3P). In Thermodesulfovibrio yellowstonii (strain ATCC 51303 / DSM 11347 / YP87), this protein is Triosephosphate isomerase.